The chain runs to 391 residues: Probable acridone synthase 4 (391 aa).

Residue Cys-164 is part of the active site.

Belongs to the thiolase-like superfamily. Chalcone/stilbene synthases family.

The enzyme catalyses N-methylanthraniloyl-CoA + 3 malonyl-CoA + 3 H(+) = 1,3-dihydroxy-N-methylacridone + 3 CO2 + 4 CoA + H2O. The sequence is that of Probable acridone synthase 4 (ACS4) from Ruta graveolens (Common rue).